The primary structure comprises 205 residues: SREBP regulating gene protein (205 aa).

The Cytoplasmic portion of the chain corresponds to 1 to 16 (MALYVSMVWRKILRKR). The helical transmembrane segment at 17 to 35 (WVLGVVFGLSLIYFLTSTF) threads the bilayer. The Lumenal segment spans residues 36–205 (KQEERTVRDR…GESPPELLPI (170 aa)). The N-linked (GlcNAc...) asparagine glycan is linked to asparagine 67.

The protein belongs to the SPRING family.

The protein localises to the golgi apparatus membrane. Positively regulates hepatic SREBP signaling pathway by modulating the proper localization of SCAP (SREBP cleavage-activating protein) to the endoplasmic reticulum, thereby controlling the level of functional SCAP. This chain is SREBP regulating gene protein, found in Xenopus laevis (African clawed frog).